Consider the following 218-residue polypeptide: Large ribosomal subunit protein uL3 (218 aa).

The disordered stretch occupies residues 126-169; that stretch reads HGFSRGPMTHGSKNHRQPGSIGAGTTPGRIYPGKRMSGRYGGKK.

It belongs to the universal ribosomal protein uL3 family. As to quaternary structure, part of the 50S ribosomal subunit. Forms a cluster with proteins L14 and L19.

Its function is as follows. One of the primary rRNA binding proteins, it binds directly near the 3'-end of the 23S rRNA, where it nucleates assembly of the 50S subunit. The sequence is that of Large ribosomal subunit protein uL3 from Synechococcus sp. (strain CC9902).